The sequence spans 445 residues: Phosphoglucosamine mutase (445 aa).

Residue Ser-99 is the Phosphoserine intermediate of the active site. Residues Ser-99, Asp-242, Asp-244, and Asp-246 each coordinate Mg(2+). A Phosphoserine modification is found at Ser-99.

This sequence belongs to the phosphohexose mutase family. Requires Mg(2+) as cofactor. In terms of processing, activated by phosphorylation.

The catalysed reaction is alpha-D-glucosamine 1-phosphate = D-glucosamine 6-phosphate. Catalyzes the conversion of glucosamine-6-phosphate to glucosamine-1-phosphate. The protein is Phosphoglucosamine mutase of Helicobacter pylori (strain P12).